A 413-amino-acid chain; its full sequence is Putative competence-damage inducible protein (413 aa).

Belongs to the CinA family.

The polypeptide is Putative competence-damage inducible protein (Halothermothrix orenii (strain H 168 / OCM 544 / DSM 9562)).